The primary structure comprises 472 residues: NADH-quinone oxidoreductase subunit N (472 aa).

14 consecutive transmembrane segments (helical) span residues 5 to 25, 36 to 56, 77 to 97, 103 to 123, 126 to 146, 158 to 178, 197 to 217, 229 to 249, 264 to 284, 292 to 309, 319 to 339, 363 to 383, 396 to 416, and 441 to 461; these read LLTTEMLTALLGIGLLAIGLL, AYAAVFGLLGILVVTFFQYGI, IFLVAAILVILSAIDYVDGLP, FYALLVFATLGMMVMASANDL, LYVGMELMTITFFILVAYILG, LLLGGASSAVLLYGLSLLYGL, LAIAVVTIIAGFGFKISAVPF, PTPVTGFLAAASKAAGFAVLV, WLTVIAVLAGVTMVIGNVVAI, MLAYSSVAQAGYLLVGLM, ILFYAMLYVVANMGAFAVATA, ASVMTISLLSLAGIPPLAGFV, GVLWPAFLGFVMSMVSVYYYL, and LTVIFSMVVTVILGIYPGPLA.

It belongs to the complex I subunit 2 family. In terms of assembly, NDH-1 is composed of 14 different subunits. Subunits NuoA, H, J, K, L, M, N constitute the membrane sector of the complex.

The protein resides in the cell membrane. The enzyme catalyses a quinone + NADH + 5 H(+)(in) = a quinol + NAD(+) + 4 H(+)(out). In terms of biological role, NDH-1 shuttles electrons from NADH, via FMN and iron-sulfur (Fe-S) centers, to quinones in the respiratory chain. The immediate electron acceptor for the enzyme in this species is believed to be a menaquinone. Couples the redox reaction to proton translocation (for every two electrons transferred, four hydrogen ions are translocated across the cytoplasmic membrane), and thus conserves the redox energy in a proton gradient. The polypeptide is NADH-quinone oxidoreductase subunit N (Heliobacterium modesticaldum (strain ATCC 51547 / Ice1)).